A 93-amino-acid chain; its full sequence is MICAVYKSRRKADSYLFVEKRNEFERVPEALLEMFGPPELVMMLPLMKRDHLGFADIEKVKSELADKGFYLQLPPPVVNLLEEHKREIGYSRD.

Positions methionine 1–lysine 85 constitute a YcgL domain.

This Shewanella woodyi (strain ATCC 51908 / MS32) protein is YcgL domain-containing protein Swoo_2115.